A 366-amino-acid chain; its full sequence is tRNA 2-selenouridine synthase (366 aa).

A Rhodanese domain is found at 12–135 (FLNDVPMMDA…MRTFLLDTLH (124 aa)). The active-site S-selanylcysteine intermediate is the Cys95.

It belongs to the SelU family. In terms of assembly, monomer.

It catalyses the reaction 5-methylaminomethyl-2-thiouridine(34) in tRNA + selenophosphate + (2E)-geranyl diphosphate + H2O + H(+) = 5-methylaminomethyl-2-selenouridine(34) in tRNA + (2E)-thiogeraniol + phosphate + diphosphate. The catalysed reaction is 5-methylaminomethyl-2-thiouridine(34) in tRNA + (2E)-geranyl diphosphate = 5-methylaminomethyl-S-(2E)-geranyl-thiouridine(34) in tRNA + diphosphate. The enzyme catalyses 5-methylaminomethyl-S-(2E)-geranyl-thiouridine(34) in tRNA + selenophosphate + H(+) = 5-methylaminomethyl-2-(Se-phospho)selenouridine(34) in tRNA + (2E)-thiogeraniol. It carries out the reaction 5-methylaminomethyl-2-(Se-phospho)selenouridine(34) in tRNA + H2O = 5-methylaminomethyl-2-selenouridine(34) in tRNA + phosphate. Its function is as follows. Involved in the post-transcriptional modification of the uridine at the wobble position (U34) of tRNA(Lys), tRNA(Glu) and tRNA(Gln). Catalyzes the conversion of 2-thiouridine (S2U-RNA) to 2-selenouridine (Se2U-RNA). Acts in a two-step process involving geranylation of 2-thiouridine (S2U) to S-geranyl-2-thiouridine (geS2U) and subsequent selenation of the latter derivative to 2-selenouridine (Se2U) in the tRNA chain. The chain is tRNA 2-selenouridine synthase from Pseudomonas syringae pv. tomato (strain ATCC BAA-871 / DC3000).